Here is a 573-residue protein sequence, read N- to C-terminus: AP-4 complex accessory subunit Tepsin (573 aa).

Positions 8–141 (RDRLSFLHRL…FSDAVPQPPS (134 aa)) constitute an ENTH domain. 2 disordered regions span residues 136–155 (VPQPPSQPPQIPPPAGMGAQ) and 194–311 (NAVR…NDCQ). Positions 137-150 (PQPPSQPPQIPPPA) are enriched in pro residues. The span at 217-229 (PAVTPSASHTHPN) shows a compositional bias: polar residues. Low complexity predominate over residues 260-293 (SSPSSQNSSCTSNLSRASDSGSRSGSDSHSGTSR). Over residues 294-303 (EPGDLAERAE) the composition is skewed to basic and acidic residues. Residue Ser-400 is modified to Phosphoserine. Residues 497 to 526 (CSSEQGTESEQRLENTDTPEDSSSPLPWSP) form a disordered region. The tract at residues 526–536 (PNSLFAGMELV) is interaction with AP4B1. The segment at 563–573 (SEPSAFAFLNM) is interaction with AP4E1.

As to quaternary structure, interacts with AP4B1 and AP4E1; the interaction is direct and mediates the association of TEPSIN with the adapter-like complex 4 (AP-4), a heterotetramer composed of AP4B1, AP4E1, AP4M1 and AP4S1.

The protein localises to the golgi apparatus. Its subcellular location is the trans-Golgi network membrane. The protein resides in the cytoplasmic vesicle. It is found in the cytoplasm. It localises to the cytosol. Functionally, associates with the adapter-like complex 4 (AP-4) and may therefore play a role in vesicular trafficking of proteins at the trans-Golgi network. This chain is AP-4 complex accessory subunit Tepsin, found in Mus musculus (Mouse).